Reading from the N-terminus, the 89-residue chain is Small ribosomal subunit protein uS14A (89 aa).

The protein belongs to the universal ribosomal protein uS14 family. Part of the 30S ribosomal subunit. Contacts proteins S3 and S10.

Functionally, binds 16S rRNA, required for the assembly of 30S particles and may also be responsible for determining the conformation of the 16S rRNA at the A site. In Listeria innocua serovar 6a (strain ATCC BAA-680 / CLIP 11262), this protein is Small ribosomal subunit protein uS14A.